We begin with the raw amino-acid sequence, 444 residues long: Trigger factor (444 aa).

The PPIase FKBP-type domain maps to 165 to 250 (GDFAKFDFEG…LHEIQELKIP (86 aa)).

This sequence belongs to the FKBP-type PPIase family. Tig subfamily.

The protein localises to the cytoplasm. It carries out the reaction [protein]-peptidylproline (omega=180) = [protein]-peptidylproline (omega=0). Functionally, involved in protein export. Acts as a chaperone by maintaining the newly synthesized protein in an open conformation. Functions as a peptidyl-prolyl cis-trans isomerase. The sequence is that of Trigger factor (tig) from Campylobacter jejuni subsp. jejuni serotype O:2 (strain ATCC 700819 / NCTC 11168).